A 129-amino-acid chain; its full sequence is Small ribosomal subunit protein uS9 (129 aa).

Residues 107–129 (SRVVERKKPGKKKARRSPQFSKR) form a disordered region. The segment covering 114 to 129 (KPGKKKARRSPQFSKR) has biased composition (basic residues).

It belongs to the universal ribosomal protein uS9 family.

The chain is Small ribosomal subunit protein uS9 from Sulfurovum sp. (strain NBC37-1).